A 735-amino-acid chain; its full sequence is Cyclic nucleotide-gated channel cone photoreceptor subunit alpha (735 aa).

Residues 1–214 (MAKINTQHSY…PSSNMYYNWL (214 aa)) lie on the Cytoplasmic side of the membrane. The tract at residues 142 to 191 (VNFSNNTNEDKKEEKKEVKEEKKEEKKEEKKEEKKDDKKDDKKDDKKDDK) is disordered. Basic and acidic residues predominate over residues 149–191 (NEDKKEEKKEVKEEKKEEKKEEKKEEKKDDKKDDKKDDKKDDK). Residues 215-236 (TIIAAPVFYNWCMLICRACFDE) form a helical membrane-spanning segment. Topologically, residues 237–246 (LQIDHIKLWL) are extracellular. The helical transmembrane segment at 247–267 (FLDYCSDIIYVFDMFVRFRTG) threads the bilayer. Over 268–292 (FLEQGLLVKDEKKLRDHYTQTVQFK) the chain is Cytoplasmic. The helical transmembrane segment at 293-311 (LDVLSLLPTDLAYLKLGLN) threads the bilayer. Residues 312 to 316 (YPELR) lie on the Extracellular side of the membrane. The chain crosses the membrane as a helical span at residues 317-335 (FNRLLRIARLFEFFDRTET). Topologically, residues 336–342 (RTNYPNM) are cytoplasmic. The chain crosses the membrane as a helical span at residues 343–366 (FRIGNLVLYILIIIHWNACIYFAI). Residues 367–389 (SKVIGFGTDSWVYPNVSIPEYGR) lie on the Extracellular side of the membrane. Transmembrane regions (helical) follow at residues 390–424 (LSRKYIYSLYWSTLTLTTIGETPPPVKDEEYLFVV) and 425–449 (IDFLVGVLIFATIVGNVGSMISNMN). The Cytoplasmic portion of the chain corresponds to 450 to 735 (ASRAEFQAKV…PEKPEEQKKD (286 aa)). Residues 532–654 (LLIE…DNLI), Glu591, and Arg606 each bind 3',5'-cyclic GMP. Residues 715-735 (GSGSLSVGEPEPEKPEEQKKD) are disordered. The segment covering 725–735 (EPEKPEEQKKD) has biased composition (basic and acidic residues).

This sequence belongs to the cyclic nucleotide-gated cation channel (TC 1.A.1.5) family.

The protein localises to the membrane. Its function is as follows. Visual signal transduction is mediated by a G-protein coupled cascade using cGMP as second messenger. This protein can be activated by cyclic GMP which leads to an opening of the cation channel and thereby causing a depolarization of cone photoreceptors. This Gallus gallus (Chicken) protein is Cyclic nucleotide-gated channel cone photoreceptor subunit alpha.